The sequence spans 216 residues: MPIGVPKVPYRIPGDEEATWVDLYNVMYRERTLFLGQEIRCEITNHITGLMVYLSIEDGISDIFLFINSPGGWLISGMAIFDTMQTVTPDIYTICLGIAASMASFILLGGEPTKRIAFPHARIMLHQPASAYYRARTPEFLLEVEELHKVREMITRVYAVRTGKPFWVVSEDMERDVFMSADEAKAYGLVDIVGDEMIDKHCDTDPVWFPEMFKDW.

S101 (nucleophile) is an active-site residue. H126 is an active-site residue.

This sequence belongs to the peptidase S14 family. In terms of assembly, component of the chloroplastic Clp protease core complex.

It localises to the plastid. It is found in the chloroplast stroma. The enzyme catalyses Hydrolysis of proteins to small peptides in the presence of ATP and magnesium. alpha-casein is the usual test substrate. In the absence of ATP, only oligopeptides shorter than five residues are hydrolyzed (such as succinyl-Leu-Tyr-|-NHMec, and Leu-Tyr-Leu-|-Tyr-Trp, in which cleavage of the -Tyr-|-Leu- and -Tyr-|-Trp bonds also occurs).. Functionally, cleaves peptides in various proteins in a process that requires ATP hydrolysis. Has a chymotrypsin-like activity. Plays a major role in the degradation of misfolded proteins. The chain is ATP-dependent Clp protease proteolytic subunit from Triticum aestivum (Wheat).